Consider the following 210-residue polypeptide: MSQSYELTAEARERVGKGSARAIRRNGKIPAVIYGDKQPPLSITLPYKEVFLRIHAGGFRTTVATIDLNGEKIQVLPKDYQLDPVRGFAMHVDFLRVGKNTVVTVNVPVHFINDEKAPGIKRGGVLNIVRHEVEFTCPANAIPDFIEVDLTGLDIGDSVHISAVKLPEGIVPTITDRDFTIATVAAPAGLKSEGAEGGEAEAGQAEEGEE.

Positions 190 to 210 (LKSEGAEGGEAEAGQAEEGEE) are disordered. Positions 196–210 (EGGEAEAGQAEEGEE) are enriched in acidic residues.

It belongs to the bacterial ribosomal protein bL25 family. CTC subfamily. Part of the 50S ribosomal subunit; part of the 5S rRNA/L5/L18/L25 subcomplex. Contacts the 5S rRNA. Binds to the 5S rRNA independently of L5 and L18.

In terms of biological role, this is one of the proteins that binds to the 5S RNA in the ribosome where it forms part of the central protuberance. The chain is Large ribosomal subunit protein bL25 from Chelativorans sp. (strain BNC1).